The following is a 966-amino-acid chain: Catenin alpha-2 (966 aa).

The span at 924–940 (PEKKPLVKREKPEEYQT) shows a compositional bias: basic and acidic residues. The segment at 924 to 952 (PEKKPLVKREKPEEYQTRVRRGSQKKHIS) is disordered. Residues 941–951 (RVRRGSQKKHI) show a composition bias toward basic residues.

The protein belongs to the vinculin/alpha-catenin family.

It localises to the cell membrane. It is found in the cytoplasm. The protein resides in the cytoskeleton. The protein localises to the cell junction. Its subcellular location is the adherens junction. It localises to the cell projection. It is found in the axon. The protein resides in the nucleus. May function as a linker between cadherin adhesion receptors and the cytoskeleton to regulate cell-cell adhesion and differentiation in the nervous system. In Xenopus tropicalis (Western clawed frog), this protein is Catenin alpha-2 (ctnna2).